A 518-amino-acid polypeptide reads, in one-letter code: Membrane-bound lytic murein transglycosylase F (518 aa).

An N-terminal signal peptide occupies residues 1-21 (MKKLKINYLFIGILALLLAVA). Residues 22-269 (LWPSIPWFGK…RIEEKYLGHG (248 aa)) form a non-LT domain region. The tract at residues 270 to 518 (DDFDYVDTRT…SRKGSEEKQN (249 aa)) is LT domain. Glu314 is an active-site residue.

In the N-terminal section; belongs to the bacterial solute-binding protein 3 family. This sequence in the C-terminal section; belongs to the transglycosylase Slt family.

Its subcellular location is the cell outer membrane. It carries out the reaction Exolytic cleavage of the (1-&gt;4)-beta-glycosidic linkage between N-acetylmuramic acid (MurNAc) and N-acetylglucosamine (GlcNAc) residues in peptidoglycan, from either the reducing or the non-reducing ends of the peptidoglycan chains, with concomitant formation of a 1,6-anhydrobond in the MurNAc residue.. Its function is as follows. Murein-degrading enzyme that degrades murein glycan strands and insoluble, high-molecular weight murein sacculi, with the concomitant formation of a 1,6-anhydromuramoyl product. Lytic transglycosylases (LTs) play an integral role in the metabolism of the peptidoglycan (PG) sacculus. Their lytic action creates space within the PG sacculus to allow for its expansion as well as for the insertion of various structures such as secretion systems and flagella. In Escherichia coli O6:H1 (strain CFT073 / ATCC 700928 / UPEC), this protein is Membrane-bound lytic murein transglycosylase F.